A 142-amino-acid chain; its full sequence is Deoxyuridine 5'-triphosphate nucleotidohydrolase (142 aa).

Substrate contacts are provided by residues Arg62 to Gly64, Asn75, Thr79 to Asp81, and Lys89.

It belongs to the dUTPase family. The cofactor is Mg(2+).

It catalyses the reaction dUTP + H2O = dUMP + diphosphate + H(+). Its pathway is pyrimidine metabolism; dUMP biosynthesis; dUMP from dCTP (dUTP route): step 2/2. Functionally, this enzyme is involved in nucleotide metabolism: it produces dUMP, the immediate precursor of thymidine nucleotides and it decreases the intracellular concentration of dUTP so that uracil cannot be incorporated into DNA. The chain is Deoxyuridine 5'-triphosphate nucleotidohydrolase from Nautilia profundicola (strain ATCC BAA-1463 / DSM 18972 / AmH).